A 147-amino-acid chain; its full sequence is Phosphoribosyl-AMP cyclohydrolase (147 aa).

Asp91 contributes to the Mg(2+) binding site. Zn(2+) is bound at residue Cys92. Residues Asp93 and Asp95 each coordinate Mg(2+). Zn(2+) contacts are provided by Cys108 and Cys115.

This sequence belongs to the PRA-CH family. Homodimer. Mg(2+) serves as cofactor. Zn(2+) is required as a cofactor.

The protein resides in the cytoplasm. The catalysed reaction is 1-(5-phospho-beta-D-ribosyl)-5'-AMP + H2O = 1-(5-phospho-beta-D-ribosyl)-5-[(5-phospho-beta-D-ribosylamino)methylideneamino]imidazole-4-carboxamide. The protein operates within amino-acid biosynthesis; L-histidine biosynthesis; L-histidine from 5-phospho-alpha-D-ribose 1-diphosphate: step 3/9. Catalyzes the hydrolysis of the adenine ring of phosphoribosyl-AMP. The sequence is that of Phosphoribosyl-AMP cyclohydrolase from Rhodopseudomonas palustris (strain BisB5).